A 243-amino-acid polypeptide reads, in one-letter code: Endochitinase (243 aa).

Disulfide bonds link cysteine 23–cysteine 85, cysteine 97–cysteine 105, and cysteine 223–cysteine 236. Glutamate 67 serves as the catalytic Proton donor.

Its subcellular location is the vacuole. The enzyme catalyses Random endo-hydrolysis of N-acetyl-beta-D-glucosaminide (1-&gt;4)-beta-linkages in chitin and chitodextrins.. Its function is as follows. Defense against chitin-containing fungal pathogens. Shows activity on chitin, tetra-N-acetylglucosamine and chitosan. This chain is Endochitinase, found in Carica papaya (Papaya).